A 182-amino-acid chain; its full sequence is Lipid A acyltransferase PagP (182 aa).

An N-terminal signal peptide occupies residues 1-21; that stretch reads MTQYFRALAFFLLLVPATAMA. Cys-22 carries N-palmitoyl cysteine lipidation. Cys-22 carries S-diacylglycerol cysteine lipidation. Active-site residues include His-55, Asp-98, and Ser-99.

Belongs to the lipid A palmitoyltransferase family. Homodimer.

It is found in the cell outer membrane. It carries out the reaction a lipid A + a 1,2-diacyl-sn-glycero-3-phosphocholine = a hepta-acyl lipid A + a 2-acyl-sn-glycero-3-phosphocholine. The catalysed reaction is a lipid IVA + a 1,2-diacyl-sn-glycero-3-phosphocholine = a lipid IVB + a 2-acyl-sn-glycero-3-phosphocholine. It catalyses the reaction a lipid IIA + a 1,2-diacyl-sn-glycero-3-phosphocholine = a lipid IIB + a 2-acyl-sn-glycero-3-phosphocholine. Its function is as follows. Transfers a fatty acid residue from the sn-1 position of a phospholipid to the N-linked hydroxyfatty acid chain on the proximal unit of lipid A or its precursors. Required for resistance to cationic antimicrobial peptides (CAMPs). Modifications of lipid A with an acyl chain to evade host immune defenses by resisting antibody-mediated complement lysis during respiratory infection. In Bordetella bronchiseptica (strain ATCC BAA-588 / NCTC 13252 / RB50) (Alcaligenes bronchisepticus), this protein is Lipid A acyltransferase PagP.